The chain runs to 141 residues: Single-stranded DNA-binding protein 2 (141 aa).

The SSB domain occupies 1–104 (MLNRTVLVGR…VVADSVQFLE (104 aa)). The tract at residues 104–141 (EPKNNNQQQNNNYQQQRQTQTGNNPFDNNADSIEDLPF) is disordered. Over residues 107 to 127 (NNNQQQNNNYQQQRQTQTGNN) the composition is skewed to low complexity.

In terms of assembly, homotetramer.

This is Single-stranded DNA-binding protein 2 (ssb-p) from Staphylococcus aureus (strain Mu50 / ATCC 700699).